The following is a 115-amino-acid chain: Probable K(+)/H(+) antiporter subunit C (115 aa).

Helical transmembrane passes span 4 to 21, 28 to 47, and 75 to 97; these read ILSA…YLLL, VIIG…FGMG, and ALVL…VLLA.

The protein belongs to the CPA3 antiporters (TC 2.A.63) subunit C family. May form a hetero-oligomeric complex that consists of six subunits: PhaAB, PhaC, PhaD, PhaE, PhaF and PhaG.

Its subcellular location is the cell membrane. In terms of biological role, part of a K(+) efflux system which is required for the adaptation of R.meliloti to alkaline pH as well as for the infection process during symbiotic nodule development. The sequence is that of Probable K(+)/H(+) antiporter subunit C (phaC) from Rhizobium meliloti (strain 1021) (Ensifer meliloti).